The following is a 1195-amino-acid chain: Protein PIP82 (1195 aa).

A compositionally biased stretch (low complexity) spans 1 to 10 (MSHQEQQFQH). Disordered regions lie at residues 1–55 (MSHQ…IGSS), 85–132 (KLRG…SQQF), 291–471 (NTFD…TANL), 493–515 (KVAKEPEELETKAEGSATGGASG), 544–567 (QRNANNQNATTSKQPKPNTVGHEP), 613–637 (EEDNEEDHSQDQTKRGQSSVSGIAT), 702–771 (MSPV…IVPK), 833–977 (SAGS…VKTS), and 1060–1195 (QITV…VVEI). The span at 11–26 (YPHHQHHHHHHHHHIH) shows a compositional bias: basic residues. Positions 37-50 (RSSDLEPNRSRNTD) are enriched in basic and acidic residues. Over residues 109-118 (GSAKDGAGAA) the composition is skewed to low complexity. Residues 119 to 132 (QQTHLQVAGQSQQF) are compositionally biased toward polar residues. The span at 300–313 (HEQFERGKISHETD) shows a compositional bias: basic and acidic residues. The segment covering 351 to 360 (QQAAAEESPQ) has biased composition (low complexity). Residues 361 to 371 (ANPPPPPPPRP) show a composition bias toward pro residues. The interval 400-450 (ETTKTAENADENNASRKLSIRQNIKRLRKSIKRPSKIKSKAAAPVPDSDEE) is phospho-regulated basic and hydrophobic (PRBH) motif. A compositionally biased stretch (basic residues) spans 422–438 (NIKRLRKSIKRPSKIKS). Residues 494-505 (VAKEPEELETKA) show a composition bias toward basic and acidic residues. Polar residues predominate over residues 545 to 560 (RNANNQNATTSKQPKP). Polar residues-rich tracts occupy residues 732–742 (SGPQKSMSYSP) and 856–867 (RVQSPQIGNSRE). The segment covering 872-891 (QEEEDKEAERDSEEEEEERD) has biased composition (acidic residues). Pro residues-rich tracts occupy residues 898–910 (SESPPPPPLPQRR) and 925–939 (VPPPLPVSKPPPPPS). Low complexity predominate over residues 940–968 (VETIPSVASLPSPAPVTRSMAQRSASMSR). Residues 1075–1085 (QSDQSDQSAHQ) are compositionally biased toward polar residues. Basic and acidic residues predominate over residues 1086–1095 (EITDTRKTKS). Residues 1102–1111 (RQNSNCSRSE) are compositionally biased toward polar residues. Composition is skewed to low complexity over residues 1114–1149 (SPLSFPSSRRSSTPTNLNANSNSNPNPSTNPNQNPS) and 1179–1195 (SYYSISPSGSSRYVVEI).

In terms of processing, phosphorylated by aPKC which lowers lipid affinity and promotes dissociation from the cell cortex. In the photoreceptor cells, aPKC-mediated phosphorylation leads to its displacement from the stalk apical cortex and thus restricts its localization to the rhabdomeric apical cortex where it functions. Dephosphorylation appears to be light-dependent. As to expression, restricted to photoreceptor cells (at protein level). Not detected until approximately 48hrs after puparium formation (APF) and then maintained in the photoreceptor cells post-eclosion (at protein level).

The protein localises to the cytoplasm. The protein resides in the cell cortex. It localises to the cytosol. Its subcellular location is the cell projection. It is found in the rhabdomere. Functionally, required for the morphological differentiation and maintenance of the rhabdomeric photoreceptor apical domain. Acts as a downstream component of the gl and Pph13 transcriptional pathway which is required for photoreceptor cell development. Likely to function by regulating the trafficking or retention of rhabdomeric proteins including the phototransduction proteins ninaE and didum. In Drosophila melanogaster (Fruit fly), this protein is Protein PIP82.